The sequence spans 269 residues: Tryptophan synthase alpha chain (269 aa).

Catalysis depends on proton acceptor residues Glu49 and Asp60.

The protein belongs to the TrpA family. In terms of assembly, tetramer of two alpha and two beta chains.

The enzyme catalyses (1S,2R)-1-C-(indol-3-yl)glycerol 3-phosphate + L-serine = D-glyceraldehyde 3-phosphate + L-tryptophan + H2O. It participates in amino-acid biosynthesis; L-tryptophan biosynthesis; L-tryptophan from chorismate: step 5/5. Its function is as follows. The alpha subunit is responsible for the aldol cleavage of indoleglycerol phosphate to indole and glyceraldehyde 3-phosphate. The chain is Tryptophan synthase alpha chain from Azotobacter vinelandii (strain DJ / ATCC BAA-1303).